A 128-amino-acid chain; its full sequence is Fluoride-specific ion channel FluC (128 aa).

The next 4 membrane-spanning stretches (helical) occupy residues 5-25 (IVAIFVGAGLGAVLRWFLGLA), 35-55 (LGTLAANLLGGYAIGIAAVVF), 67-87 (LFVITGFLGGLTTFSTYSVEV), and 96-116 (FGWAFAVAVLHLTGSFTLTAL). Residues glycine 75 and threonine 78 each coordinate Na(+).

Belongs to the fluoride channel Fluc/FEX (TC 1.A.43) family.

The protein localises to the cell inner membrane. The catalysed reaction is fluoride(in) = fluoride(out). With respect to regulation, na(+) is not transported, but it plays an essential structural role and its presence is essential for fluoride channel function. Fluoride-specific ion channel. Important for reducing fluoride concentration in the cell, thus reducing its toxicity. This chain is Fluoride-specific ion channel FluC, found in Burkholderia vietnamiensis (strain G4 / LMG 22486) (Burkholderia cepacia (strain R1808)).